Here is a 329-residue protein sequence, read N- to C-terminus: Catabolite control protein A (329 aa).

The 57-residue stretch at 1–57 (MTVTIYDVAREARVSMATVSRVVNGNQNVKAETKNKVNEVIKRLNYRPNAVARGLAS) folds into the HTH lacI-type domain. The segment at residues 5 to 24 (IYDVAREARVSMATVSRVVN) is a DNA-binding region (H-T-H motif).

Functionally, global transcriptional regulator of carbon catabolite repression (CCR) and carbon catabolite activation (CCA), which ensures optimal energy usage under diverse conditions. The polypeptide is Catabolite control protein A (ccpA) (Staphylococcus aureus (strain COL)).